A 198-amino-acid chain; its full sequence is Transcription factor FapR (198 aa).

A MaoC-like domain is found at 102–167; the sequence is TRIARGHHLF…HGRTIVEVNS (66 aa).

It belongs to the FapR family.

Functionally, transcriptional factor involved in regulation of membrane lipid biosynthesis by repressing genes involved in fatty acid and phospholipid metabolism. In Geobacillus kaustophilus (strain HTA426), this protein is Transcription factor FapR.